The sequence spans 108 residues: Large ribosomal subunit protein eL36x (108 aa).

Disordered stretches follow at residues 13–34 and 75–108; these read GHVV…KTSK and KLGT…EKKK. Residues 75–84 are compositionally biased toward basic residues; that stretch reads KLGTHKRAKR.

It belongs to the eukaryotic ribosomal protein eL36 family.

In Arabidopsis thaliana (Mouse-ear cress), this protein is Large ribosomal subunit protein eL36x (RPL36C).